Here is a 166-residue protein sequence, read N- to C-terminus: Gem-associated protein 6 (166 aa).

The Sm domain maps to 4-73 (WMKKSPLEWE…VQTVETISEG (70 aa)). One can recognise an AD domain in the interval 68 to 166 (ETISEGDHRV…LIQGHLSASQ (99 aa)). 2 positions are modified to phosphoserine: Ser94 and Ser165.

Part of the core SMN complex that contains SMN1, GEMIN2/SIP1, DDX20/GEMIN3, GEMIN4, GEMIN5, GEMIN6, GEMIN7, GEMIN8 and STRAP/UNRIP. Part of the SMN-Sm complex that contains SMN1, GEMIN2/SIP1, DDX20/GEMIN3, GEMIN4, GEMIN5, GEMIN6, GEMIN7, GEMIN8, STRAP/UNRIP and the Sm proteins SNRPB, SNRPD1, SNRPD2, SNRPD3, SNRPE, SNRPF and SNRPG. Interacts with GEMIN7; the interaction is direct. Interacts with GEMIN8; the interaction is direct. Interacts with SNRPB, SNRPD2, SNRPD3 and SNRPE; the interaction is direct.

It is found in the nucleus. The protein resides in the nucleoplasm. It localises to the gem. Its subcellular location is the cytoplasm. Functionally, the SMN complex catalyzes the assembly of small nuclear ribonucleoproteins (snRNPs), the building blocks of the spliceosome, and thereby plays an important role in the splicing of cellular pre-mRNAs. Most spliceosomal snRNPs contain a common set of Sm proteins SNRPB, SNRPD1, SNRPD2, SNRPD3, SNRPE, SNRPF and SNRPG that assemble in a heptameric protein ring on the Sm site of the small nuclear RNA to form the core snRNP (Sm core). In the cytosol, the Sm proteins SNRPD1, SNRPD2, SNRPE, SNRPF and SNRPG are trapped in an inactive 6S pICln-Sm complex by the chaperone CLNS1A that controls the assembly of the core snRNP. To assemble core snRNPs, the SMN complex accepts the trapped 5Sm proteins from CLNS1A forming an intermediate. Binding of snRNA inside 5Sm triggers eviction of the SMN complex, thereby allowing binding of SNRPD3 and SNRPB to complete assembly of the core snRNP. The sequence is that of Gem-associated protein 6 (Gemin6) from Mus musculus (Mouse).